Reading from the N-terminus, the 149-residue chain is Decarboxylase AgnL1 (149 aa).

The region spanning 30 to 125 (PGMSEEDYRH…VGDHEKFADT (96 aa)) is the EthD domain.

The protein belongs to the tpcK family.

It catalyses the reaction atrochrysone carboxylate + H(+) = atrochrysone + CO2. The protein operates within secondary metabolite biosynthesis. Decarboxylase; part of the gene cluster that mediates the biosynthesis of agnestins, dihydroxy-xanthone metabolites. The pathway begins with the assembly and cyclization of atrochrysone thioester by the non-reducing polyketide synthase Agnpks1. The atrochrysone carboxyl ACP thioesterase AgnL7 then breaks the thioester bond and releases the atrochrysone carboxylic acid as the first enzyme-free intermediate. The decarboxylase AgnL1 then catalyzes the concerted decarboxylation-elimination required to convert atochrysone carboxylic acid into emodin anthrone, which is further oxidized to emodin by the anthrone oxygenase AgnL2. Emodin then undergoes reduction catalyzed by the oxidoreductase AgnL4 to yield the dihydroquinone tautomer which is the substrate for reduction by the short chain dehydrogenase AgnL6 reduction to produce hydroxyketone, followed by AgnL8 dehydration and likely spontaneous autoxidation to chrysophanol. Baeyer-Villiger oxidation by the oxidase AgnL3 leads to monodictyphenone via cleavage of the C-10/C-10a bond of chrysophanol. Alternative cleavage at the C-4a/C-10 bond of chrysophanol also leads to the formation some cephalone F. Further conversion to agnestins A and B, requires reduction to dihydro-monodictyphenone, oxidation to agnestin C probably via an epoxide, and rearrangement to either agnestin A or agnestin B directly, although agnestin A or agnestin B can also interconvert. Within the cluster, AgnR1 is the only unassigned oxidoreductase present which could be involved in this conversion. However, AgnR1 seems not to be involved in this step, and thus genes involved in the proposed oxidation/reduction may be located elsewhere on the genome. Further agnestin A derivatives are probably formed by spontaneous decarboxylations, dehydrations and methanolysis reactions. This chain is Decarboxylase AgnL1, found in Paecilomyces divaricatus (Penicillium divaricatum).